The primary structure comprises 226 residues: ATP synthase subunit a (226 aa).

6 helical membrane-spanning segments follow: residues 17-37 (FSYF…AMMA), 79-99 (LVAT…IPGF), 105-125 (SLNL…FEGI), 134-154 (FAHF…IEIV), 176-196 (LFLM…AYVL), and 199-219 (FMAF…LAGA).

The protein belongs to the ATPase A chain family. In terms of assembly, F-type ATPases have 2 components, CF(1) - the catalytic core - and CF(0) - the membrane proton channel. CF(1) has five subunits: alpha(3), beta(3), gamma(1), delta(1), epsilon(1). CF(0) has three main subunits: a(1), b(2) and c(9-12). The alpha and beta chains form an alternating ring which encloses part of the gamma chain. CF(1) is attached to CF(0) by a central stalk formed by the gamma and epsilon chains, while a peripheral stalk is formed by the delta and b chains.

It localises to the cell inner membrane. Key component of the proton channel; it plays a direct role in the translocation of protons across the membrane. This is ATP synthase subunit a from Campylobacter jejuni subsp. jejuni serotype O:23/36 (strain 81-176).